A 1823-amino-acid polypeptide reads, in one-letter code: AF4/FMR2 family member lilli (1823 aa).

The segment covering 1–41 (MAQQQQQQHQQQQHHQQQQQQLQQQQQLLQYNNNSYNLNYN) has biased composition (low complexity). Disordered regions lie at residues 1–87 (MAQQ…DPEI), 126–305 (GFGS…ENHI), 422–544 (QQLT…KKKY), 570–626 (AGPG…WHLS), 686–712 (DSRHMDDDEDEQADQQHQQQQQRYGVG), 753–1057 (PKNQ…DIPT), 1071–1287 (AAAQ…LKPR), 1322–1350 (ARQHHHQPERLKTQQNGHLSSRSAEGART), 1413–1448 (FMLKQELPARRRKRSSSSSSSPYKEKKRKKEKAEQL), 1480–1531 (ENSA…AIAS), 1547–1567 (TCSEAVQTTPPPAAPPPAPRL), and 1715–1744 (GNTPSSISPSNSVGSQGSGSNTPPGKIVPQ). A compositionally biased stretch (basic and acidic residues) spans 53 to 79 (REKYERQQGIQSDDRETSLFGEPRRLN). 3 stretches are compositionally biased toward low complexity: residues 126-147 (GFGSATTSFSSSSSASASSSAS), 156-174 (QQQQQQQQQQQQQHYQQQQ), and 205-249 (PSSS…TSSP). The segment covering 426-438 (PTPPKASPTPPVI) has biased composition (pro residues). The residue at position 434 (T434) is a Phosphothreonine. A compositionally biased stretch (basic and acidic residues) spans 441-454 (LKTEKNHSLEKQDS). Residues 456 to 466 (LENDLELSESD) are compositionally biased toward acidic residues. 2 positions are modified to phosphoserine: S463 and S465. The segment covering 475–531 (SAGNSSNSSESDSSESGSEASSKGDPQQQQQQQQQHLLHQQQQHQQQQLLLQQQQQQ) has biased composition (low complexity). Over residues 582–598 (AAGGVGSGSGSTGGGSS) the composition is skewed to gly residues. The segment covering 599–612 (SSGMGTMSSSNSSN) has biased composition (low complexity). The span at 764-785 (SDSGSGSSGSGSSSSDSAGGSS) shows a compositional bias: low complexity. The span at 818–827 (HKAQPNSVTL) shows a compositional bias: polar residues. A compositionally biased stretch (basic residues) spans 839 to 849 (PRQKKPRKKKM). Residues S859 and S860 each carry the phosphoserine modification. Composition is skewed to low complexity over residues 877–906 (AATAAAAAANAAAASVMPVAAAAAAAAAPA), 917–947 (QAQQQQQQLQLQQQQQQSGNLSSASASSSQA), 962–979 (GTASSSSSSGTAATVAAG), 1002–1057 (AAMA…DIPT), and 1102–1161 (NSSN…QLLQ). The segment at residues 908–920 (KKGRGRPRKQAQQ) is a DNA-binding region (a.T hook). Residues S939 and S941 each carry the phosphoserine modification. The span at 1172–1181 (TLKQSAQQRL) shows a compositional bias: polar residues. Low complexity-rich tracts occupy residues 1182–1203 (SSSDCSSSASSDSSSNSSASSS) and 1253–1280 (QQQQQQQQQQQQQQQQQQQQQQQQQQQQ). Residues 1334–1344 (TQQNGHLSSRS) are compositionally biased toward polar residues. Residues 1480-1496 (ENSANASPNKLQQQNAR) are compositionally biased toward polar residues. S1486 carries the post-translational modification Phosphoserine. Residues 1497-1531 (QLPLSQSQLQHQHQHQHQLQQQQSQSTATGHAIAS) show a composition bias toward low complexity. The span at 1555-1565 (TPPPAAPPPAP) shows a compositional bias: pro residues. A compositionally biased stretch (low complexity) spans 1715–1735 (GNTPSSISPSNSVGSQGSGSN).

The protein belongs to the AF4 family.

It is found in the nucleus. In terms of biological role, has a role in transcriptional regulation. Acts in parallel with the Ras/MAPK and the PI3K/PKB pathways in the control of cell identity and cellular growth. Essential for regulation of the cytoskeleton and cell growth but not for cell proliferation or growth rate. Required specifically for the microtubule-based basal transport of lipid droplets. Plays a partially redundant function downstream of Raf in cell fate specification in the developing eye. Pair-rule protein that regulates embryonic cellularization, gastrulation and segmentation. The sequence is that of AF4/FMR2 family member lilli from Drosophila virilis (Fruit fly).